Here is a 382-residue protein sequence, read N- to C-terminus: Alkanesulfonate monooxygenase (382 aa).

It belongs to the SsuD family. In terms of assembly, homotetramer.

It carries out the reaction an alkanesulfonate + FMNH2 + O2 = an aldehyde + FMN + sulfite + H2O + 2 H(+). Functionally, catalyzes the desulfonation of aliphatic sulfonates. This Yersinia pseudotuberculosis serotype O:1b (strain IP 31758) protein is Alkanesulfonate monooxygenase.